The sequence spans 303 residues: Major fimbrium anchoring subunit FimB (303 aa).

Positions 1 to 22 (MNDAKKYIVSVLILLVAGMFGG) are cleaved as a signal peptide. A lipid anchor (N-palmitoyl cysteine) is attached at cysteine 23. The S-diacylglycerol cysteine moiety is linked to residue cysteine 23.

The protein belongs to the bacteroidetes fimbrillin superfamily. FimB/Mfa2 family. In terms of assembly, fimB is not part of the fimbrium itself, but anchors the fimbrium in the outer membrane. Linear, head-to-tail oligomerization of fimbrial subunits mediates assembly of the fimbrium stalk, while the minor components FimC, FimD and FimE probably form the fimbrium tip. The anchoring subunit FimB limits fimbrium length and is important for solid fimbrium attachment to the outer membrane. In its absence, the major fimbriae become very long and are easily detached from the membrane.

It localises to the cell outer membrane. Anchoring subunit of the major fimbriae. Regulates fimbrial length. These filamentous pili are attached to the cell surface; they mediate biofilm formation, adhesion onto host cells and onto other bacteria that are part of the oral microbiome. Fimbriae of P.gingivalis are major virulence factors. This chain is Major fimbrium anchoring subunit FimB, found in Porphyromonas gingivalis (strain ATCC BAA-308 / W83).